We begin with the raw amino-acid sequence, 464 residues long: Alpha-2A adrenergic receptor (464 aa).

The Extracellular segment spans residues 1–47; it reads MFRQEQRWPRQLWPMGSLQPDSGNASWNGTEGPGGGTRATPYSLQVT. Positions 13 to 34 are disordered; that stretch reads WPMGSLQPDSGNASWNGTEGPG. Polar residues predominate over residues 19–29; the sequence is QPDSGNASWNG. N24 and N28 each carry an N-linked (GlcNAc...) asparagine glycan. A helical transmembrane segment spans residues 48–73; sequence VTLVCLVGLLILLTVFGNVLVIIAVF. At 74–84 the chain is on the cytoplasmic side; sequence TSRALKAPQNL. The chain crosses the membrane as a helical span at residues 85–110; it reads FLVSLASADILVATLVIPFSLANEVM. Residues 111 to 120 lie on the Extracellular side of the membrane; it reads GYWYFGKAWC. C120 and C201 are disulfide-bonded. Residues 121-143 traverse the membrane as a helical segment; the sequence is EIYLALDVLFCTSSIVHLCAISL. The Cytoplasmic segment spans residues 144–163; the sequence is DRYWSITQAIEYNLKRTPRR. A helical transmembrane segment spans residues 164–187; it reads IKAIIVTVWVISAVISFPPLISFE. At 188-206 the chain is on the extracellular side; it reads KAGGGGQQPAEPRCEINDQ. A helical transmembrane segment spans residues 207–231; that stretch reads KWYVISSSIGSFFAPCLIMILVYVR. Residues 232-388 lie on the Cytoplasmic side of the membrane; the sequence is IYQIAKRRTR…RQNREKRFTF (157 aa). Residues 240–378 form a disordered region; sequence TRVPPSRRGP…GGAKASRWRG (139 aa). Residues 251–268 are compositionally biased toward low complexity; sequence AHAAAPPGGAERRPNGLG. Residues 312–329 show a composition bias toward basic and acidic residues; the sequence is SSEHAERPPGARRPERGL. At S345 the chain carries Phosphoserine. Gly residues predominate over residues 354-363; it reads AGSGTSGSGP. R367 is subject to Omega-N-methylarginine. Residues 389-413 traverse the membrane as a helical segment; it reads VLAVVIGVFVVCWFPFFFTYTLTAV. The Extracellular segment spans residues 414 to 423; that stretch reads GCSVPRTLFK. The helical transmembrane segment at 424–444 threads the bilayer; that stretch reads FFFWFGYCNSSLNPVIYTIFN. At 445 to 464 the chain is on the cytoplasmic side; the sequence is HDFRRAFKKILCRGDRKRIV. C456 carries the S-palmitoyl cysteine lipid modification.

It belongs to the G-protein coupled receptor 1 family. Adrenergic receptor subfamily. ADRA2A sub-subfamily. Component of the ADA2A-containing complex (ATAC), composed of KAT14, KAT2A, TADA2L, TADA3L, ZZ3, MBIP, WDR5, YEATS2, CCDC101 and DR1.

The protein localises to the cell membrane. In terms of biological role, alpha-2 adrenergic receptors mediate the catecholamine-induced inhibition of adenylate cyclase through the action of G proteins. Component of the ATAC complex, a complex with histone acetyltransferase activity on histones H3 and H4. This chain is Alpha-2A adrenergic receptor, found in Cavia porcellus (Guinea pig).